We begin with the raw amino-acid sequence, 704 residues long: Protein NBR1 homolog (704 aa).

At methionine 1 the chain carries N-acetylmethionine. The region spanning 7-92 is the PB1 domain; it reads ALVVKVSYGG…KFLKINVNAG (86 aa). Polar residues-rich tracts occupy residues 95–108, 171–189, and 223–233; these read TNSAAPESSGSSTP, PQESSPCSPVTKPGSSGAS, and HSKTSGHVPNS. Disordered regions lie at residues 95–114 and 171–233; these read TNSAAPESSGSSTPAGMPNP and PQES…VPNS. The ZZ-type; degenerate zinc finger occupies 286-336; it reads HKGIRCDGCGVLPITGPRFKSKVKEDYDLCTICYSVMGNEGDYTRMDKPVS. Zn(2+) is bound by residues cysteine 291, cysteine 294, cysteine 315, and cysteine 318. One can recognise a UBA domain in the interval 657-701; that stretch reads GVSEWDPILEELQEMGFCDDVTNKRLLKKNNGSIKGVVMDLLTGE. The LIR motif lies at 661–664; it reads WDPI.

In terms of assembly, homodimer. Interacts with ATG8A, ATG8B, ATG8C, ATG8D, ATG8F and ATG8I. Binds to ubiquitin.

The protein resides in the cytoplasm. It localises to the vacuole. In terms of biological role, autophagic substrate degraded in the vacuole by non-selective autophagy. Requires ATG8 protein expression to be recognized as an autophagic substrate. Acts probably as a receptor for autophagosomal degradation of ubiquitinated proteins. Targets ubiquitinated protein aggregates derived from denatured or damaged non-native proteins generated under stress conditions. Functions additively with the E3 ubiquitin-protein ligase CHIP for autophagosomal degradation of proteotoxic aggregates formed under stress conditions. This is Protein NBR1 homolog from Arabidopsis thaliana (Mouse-ear cress).